Reading from the N-terminus, the 82-residue chain is UPF0180 protein BALH_1248 (82 aa).

The protein belongs to the UPF0180 family.

The sequence is that of UPF0180 protein BALH_1248 from Bacillus thuringiensis (strain Al Hakam).